A 349-amino-acid polypeptide reads, in one-letter code: tRNA pseudouridine synthase D (349 aa).

Phe27 is a binding site for substrate. Asp80 functions as the Nucleophile in the catalytic mechanism. Asn129 provides a ligand contact to substrate. In terms of domain architecture, TRUD spans 155 to 303 (GVPNYFGAQR…VEAARRAMLL (149 aa)). Phe329 provides a ligand contact to substrate.

Belongs to the pseudouridine synthase TruD family.

The enzyme catalyses uridine(13) in tRNA = pseudouridine(13) in tRNA. Its function is as follows. Responsible for synthesis of pseudouridine from uracil-13 in transfer RNAs. This chain is tRNA pseudouridine synthase D, found in Enterobacter sp. (strain 638).